A 642-amino-acid chain; its full sequence is MPVITLPDGSQRHYDHAVSPMDVALDIGPGLAKACIAGRVNGELVDACDLIENDAQLAIITAKDEEGLEIIRHSCAHLLGHAIKQLWPHTKMAIGPVIDNGFYYDVDLDRTLTQEDVEALEKRMHELAEKNYDVIKKKVSWHEARETFVKRGESYKVSILDENIAHDDQPGLYFHEEYVDMCRGPHVPNMRFCHHFKLMKTAGAYWRGDSNNKMLQRIYGTAWADKKALNAYLQRLEEAAKRDHRKIGKQLDLYHMQEEAPGMVFWHNDGWTIFRELEVFVRTKLKEYQYQEVKGPFMMDRVLWEKTGHWENYKDAMFTTSSENREYCIKPMNCPGHVQIFNQGLKSYRDLPLRMAEFGSCHRNEPSGSLHGLMRVRGFTQDDAHIFCTEEQIRDEVNGCIRLVYDMYSTFGFEKIVVKLSTRPEKRIGSDEMWDRAEADLAVALEENNIPFEYQLGEGAFYGPKIEFTLYDCLDRAWQCGTVQLDFSLPSRLSASYVGEDNERKVPVMIHRAILGSMERFIGILTEEFAGFFPTWLAPVQVVIMNITDSQSEYVNELTQKLSNAGIRVKADLRNEKIGFKIREHTLRRVPYMLVCGDKEVESGKVAVRTRRGKDLGSMDVNEVIEKLQQEIRSRSLKQLEE.

Residues 1-61 (MPVITLPDGS…ENDAQLAIIT (61 aa)) form the TGS domain. The segment at 243-534 (DHRKIGKQLD…LTEEFAGFFP (292 aa)) is catalytic. Lys286 bears the N6-acetyllysine mark. The Zn(2+) site is built by Cys334, His385, and His511.

Belongs to the class-II aminoacyl-tRNA synthetase family. In terms of assembly, homodimer. The cofactor is Zn(2+).

The protein localises to the cytoplasm. The catalysed reaction is tRNA(Thr) + L-threonine + ATP = L-threonyl-tRNA(Thr) + AMP + diphosphate + H(+). Its function is as follows. Catalyzes the attachment of threonine to tRNA(Thr) in a two-step reaction: L-threonine is first activated by ATP to form Thr-AMP and then transferred to the acceptor end of tRNA(Thr). Also edits incorrectly charged L-seryl-tRNA(Thr). This Escherichia fergusonii (strain ATCC 35469 / DSM 13698 / CCUG 18766 / IAM 14443 / JCM 21226 / LMG 7866 / NBRC 102419 / NCTC 12128 / CDC 0568-73) protein is Threonine--tRNA ligase.